Consider the following 168-residue polypeptide: Protein-export protein SecB (168 aa).

The disordered stretch occupies residues 1–21 (MADQPSGNNDAKQAETNGNTV).

The protein belongs to the SecB family. Homotetramer, a dimer of dimers. One homotetramer interacts with 1 SecA dimer.

The protein localises to the cytoplasm. Functionally, one of the proteins required for the normal export of preproteins out of the cell cytoplasm. It is a molecular chaperone that binds to a subset of precursor proteins, maintaining them in a translocation-competent state. It also specifically binds to its receptor SecA. The polypeptide is Protein-export protein SecB (Chelativorans sp. (strain BNC1)).